Here is a 252-residue protein sequence, read N- to C-terminus: 3-dehydroquinate dehydratase (252 aa).

Residues Ser21, 46–48 (EWR), and Arg82 each bind 3-dehydroquinate. Residue His143 is the Proton donor/acceptor of the active site. Lys170 functions as the Schiff-base intermediate with substrate in the catalytic mechanism. 3 residues coordinate 3-dehydroquinate: Arg213, Ser232, and Gln236.

The protein belongs to the type-I 3-dehydroquinase family. In terms of assembly, homodimer.

The enzyme catalyses 3-dehydroquinate = 3-dehydroshikimate + H2O. The protein operates within metabolic intermediate biosynthesis; chorismate biosynthesis; chorismate from D-erythrose 4-phosphate and phosphoenolpyruvate: step 3/7. Involved in the third step of the chorismate pathway, which leads to the biosynthesis of aromatic amino acids. Catalyzes the cis-dehydration of 3-dehydroquinate (DHQ) and introduces the first double bond of the aromatic ring to yield 3-dehydroshikimate. The chain is 3-dehydroquinate dehydratase from Escherichia coli O157:H7.